Here is a 317-residue protein sequence, read N- to C-terminus: Acetyl-coenzyme A carboxylase carboxyl transferase subunit alpha (317 aa).

The CoA carboxyltransferase C-terminal domain maps to Asn33–Glu294.

It belongs to the AccA family. Acetyl-CoA carboxylase is a heterohexamer composed of biotin carboxyl carrier protein (AccB), biotin carboxylase (AccC) and two subunits each of ACCase subunit alpha (AccA) and ACCase subunit beta (AccD).

Its subcellular location is the cytoplasm. The enzyme catalyses N(6)-carboxybiotinyl-L-lysyl-[protein] + acetyl-CoA = N(6)-biotinyl-L-lysyl-[protein] + malonyl-CoA. It functions in the pathway lipid metabolism; malonyl-CoA biosynthesis; malonyl-CoA from acetyl-CoA: step 1/1. In terms of biological role, component of the acetyl coenzyme A carboxylase (ACC) complex. First, biotin carboxylase catalyzes the carboxylation of biotin on its carrier protein (BCCP) and then the CO(2) group is transferred by the carboxyltransferase to acetyl-CoA to form malonyl-CoA. The chain is Acetyl-coenzyme A carboxylase carboxyl transferase subunit alpha from Pasteurella multocida (strain Pm70).